The chain runs to 525 residues: MDVSYYDGPKDEVIEAMLKSAVTAMKLGQYEDGKGRLEDTMEFGTSNFQLLGTIYMYYGRVCRHLNHDAKALEFFEHELNMFKLIFNYPEACDSTRRIVQQALKMEKFSKARRFAEDLIDYTSNKKNGEKYIGQARILFASVCLEGCERDVESNQDEKKKLLSICAEQIAAVKLFNENNTEGAVSETKIMLIEAKCLSLDEKYEESRRKYQECIDFAIKTDQFEAVHIAYYDKALYAETYLLFFIIRDLRSALFYATKFGKERDVVKYKSKLSEEMLRNGEFHEAYLYGLEALVSIRKLGLNEHIGDVLLTIAKCLIALGKRRQAAYFIILGSVLTINQSSFKLFYEQIDVAMNQERSETATDQDACLAIDSSPDPTSSNDMINKFVVKLEHATNVETWEMIVNGIIEDQKKPVAIEKKENEEPVDMMDLIFSMSSRMDDQRTELSAARFIPPRPVSSASKKTTKSHRILPGLRANWTKVQSMKFDGHTMNRILKRSKKSKSSLDSTNSIQGDDTRSDDVTMTSK.

Residues 424 to 445 (PVDMMDLIFSMSSRMDDQRTEL) form the GoLoco domain. Positions 489–525 (TMNRILKRSKKSKSSLDSTNSIQGDDTRSDDVTMTSK) are disordered.

As to quaternary structure, interacts with gpr-1; gpr-1 forms a complex with lin-5 and GDP-bound goa-1.

The protein resides in the cytoplasm. It is found in the cell cortex. Its subcellular location is the cytoskeleton. The protein localises to the spindle. In the 1-cell embryo, probably together with gpr-1, controls nuclear rotation and spindle elongation during mitosis. Complex of gpr-1 and gpr-2, in association with lin-5, activates G-protein signaling to affect mitotic spindle force. Polarity determinants (par genes) may regulate lin-5/gpr-1/gpr-2/goa-1 locally to create the asymmetric forces that drive spindle movement. The sequence is that of G-protein regulator 2 (gpr-2) from Caenorhabditis elegans.